Consider the following 215-residue polypeptide: Large ribosomal subunit protein uL3 (215 aa).

The disordered stretch occupies residues 136-155 (GVSISHRSHGSTGQRQDPGK). Gln151 carries the N5-methylglutamine modification.

This sequence belongs to the universal ribosomal protein uL3 family. As to quaternary structure, part of the 50S ribosomal subunit. Forms a cluster with proteins L14 and L19. Methylated by PrmB.

In terms of biological role, one of the primary rRNA binding proteins, it binds directly near the 3'-end of the 23S rRNA, where it nucleates assembly of the 50S subunit. The protein is Large ribosomal subunit protein uL3 of Rickettsia africae (strain ESF-5).